A 765-amino-acid polypeptide reads, in one-letter code: BRCA1-associated RING domain protein 1 (765 aa).

The required for BRCA1 binding stretch occupies residues 20-113; that stretch reads MEPATDGLWA…KLQNLLHDNK (94 aa). The RING-type zinc finger occupies 44-81; it reads CSRCANILKEPVCLGGCEHIFCSGCISDCVGSGCPVCY. Residue Lys152 forms a Glycyl lysine isopeptide (Lys-Gly) (interchain with G-Cter in SUMO2) linkage. 3 disordered regions span residues 183–229, 299–328, and 369–410; these read AVPK…EELK, KDLRSGGSNGNRKGCHRPTTSTSDSCGSNI, and NASD…MPAR. The segment covering 195–204 has biased composition (basic residues); the sequence is SAKKHPKKSV. Residues 207–229 show a composition bias toward basic and acidic residues; the sequence is INREENLRPETKDSRFDSKEELK. Residues 316–328 are compositionally biased toward polar residues; the sequence is PTTSTSDSCGSNI. A Phosphoserine modification is found at Ser378. Thr381 carries the post-translational modification Phosphothreonine. Positions 391–403 are enriched in polar residues; the sequence is HRQMMSSPSTVKL. Lys411 is covalently cross-linked (Glycyl lysine isopeptide (Lys-Gly) (interchain with G-Cter in SUMO2)). ANK repeat units follow at residues 415 to 447, 448 to 480, and 481 to 513; these read RGETLLHIASIKGDIPSVEYLLQNGNDPNVKDH, AGWTPLHEACSHGHLKVVELLLQHNALVNTPGY, and QNDSPLHDAVKSGHIDIVKVLLSHGASRNAVNI. One copy of the ANK 4; degenerate repeat lies at 514 to 534; sequence FGVRPVDYTDNENIRSLLLLP. The interval 542-546 is flexible linker; it reads TSQCS. 2 consecutive BRCT domains span residues 549–641 and 655–765; these read NTGQ…KYEV and LLPK…PLDS.

As to quaternary structure, homo- and heterodimer. Heterodimer (RING-type zinc finger) with BRCA1. Heterodimer (via ANK repeats and BRCT domains) with CSTF1/CSTF-50. Component of the BRCA1-A complex, at least composed of the BRCA1, BARD1, UIMC1/RAP80, ABRAXAS1, BRCC3/BRCC36, BABAM2 and BABAM1/NBA1. Interacts with UBXN1. Post-translationally, processed during apoptosis. The homodimer is more susceptible to proteolytic cleavage than the BARD1/BRCA1 heterodimer.

The protein resides in the nucleus. It is found in the cytoplasm. The catalysed reaction is S-ubiquitinyl-[E2 ubiquitin-conjugating enzyme]-L-cysteine + [acceptor protein]-L-lysine = [E2 ubiquitin-conjugating enzyme]-L-cysteine + N(6)-ubiquitinyl-[acceptor protein]-L-lysine.. The protein operates within protein modification; protein ubiquitination. In terms of biological role, E3 ubiquitin-protein ligase. The BRCA1-BARD1 heterodimer specifically mediates the formation of 'Lys-6'-linked polyubiquitin chains and coordinates a diverse range of cellular pathways such as DNA damage repair, ubiquitination and transcriptional regulation to maintain genomic stability. Plays a central role in the control of the cell cycle in response to DNA damage. Acts by mediating ubiquitin E3 ligase activity that is required for its tumor suppressor function. Also forms a heterodimer with CSTF1/CSTF-50 to modulate mRNA processing and RNAP II stability by inhibiting pre-mRNA 3' cleavage. This Mus musculus (Mouse) protein is BRCA1-associated RING domain protein 1 (Bard1).